We begin with the raw amino-acid sequence, 152 residues long: SsrA-binding protein (152 aa).

The protein belongs to the SmpB family.

It localises to the cytoplasm. Its function is as follows. Required for rescue of stalled ribosomes mediated by trans-translation. Binds to transfer-messenger RNA (tmRNA), required for stable association of tmRNA with ribosomes. tmRNA and SmpB together mimic tRNA shape, replacing the anticodon stem-loop with SmpB. tmRNA is encoded by the ssrA gene; the 2 termini fold to resemble tRNA(Ala) and it encodes a 'tag peptide', a short internal open reading frame. During trans-translation Ala-aminoacylated tmRNA acts like a tRNA, entering the A-site of stalled ribosomes, displacing the stalled mRNA. The ribosome then switches to translate the ORF on the tmRNA; the nascent peptide is terminated with the 'tag peptide' encoded by the tmRNA and targeted for degradation. The ribosome is freed to recommence translation, which seems to be the essential function of trans-translation. The sequence is that of SsrA-binding protein from Rickettsia peacockii (strain Rustic).